Consider the following 666-residue polypeptide: MKQYAIQPATLEFNAEGTPVSRDFDDVYFSNDNGLEETRYVFLGGNRLAERFPVHSHPLFIVAESGFGTGLNFLTLWQAFDSFRSAHPQATLQRLHFISFEKFPLTRDDLALAHQHWPELAPWAEQLQAQWPLPLPGCHRLLLDRGRVTLDLWFGDINELTDQLDATLNQTVDAWFLDGFAPAKNPDMWTPNLFNAMARLARPGATLATFTSAGFVRRGLQEAGFTMQKRKGFGRKREMLCGVMEQHLMPTLSAPWFYRSGSEKRETAIIGGGIASALLSLALLRRGWQVTLYCADDQPAQGASGNRQGALYPLLSKHDAAINRFFPTAFTFARRLYDALPVSFDHDWCGVTQLGWDEKSQQKIAQMLSLALPAELASALNAEEAEQAVGVTTRCGGITYPAGGWLCPEQLTRAVIALATEQGLQTRFRHTLTSLVAQESRWQLRFMSGETASHETVVLANGHQINRFDQTRPLPVYAVGGQVSHIPTTPALSALRQVLCYDGYLTPQNPHNQQHCIGASYHRGDESTVWREEDQRQNRQRLLDCFPDAKWATEVDVSGNSARCGVRCATRDHLPMVGNVPDYHATLTHYADLADNKTSAAPAPVYPGLFMLGALGSRGLCSAPLCAEILAAQMSNEPIPLDASTLAALNPNRLWVRKLLKGKAVK.

The tRNA (mnm(5)s(2)U34)-methyltransferase stretch occupies residues 1-245 (MKQYAIQPAT…KREMLCGVME (245 aa)). The FAD-dependent cmnm(5)s(2)U34 oxidoreductase stretch occupies residues 270-666 (IGGGIASALL…RKLLKGKAVK (397 aa)).

This sequence in the N-terminal section; belongs to the methyltransferase superfamily. tRNA (mnm(5)s(2)U34)-methyltransferase family. In the C-terminal section; belongs to the DAO family. FAD serves as cofactor.

The protein resides in the cytoplasm. The enzyme catalyses 5-aminomethyl-2-thiouridine(34) in tRNA + S-adenosyl-L-methionine = 5-methylaminomethyl-2-thiouridine(34) in tRNA + S-adenosyl-L-homocysteine + H(+). In terms of biological role, catalyzes the last two steps in the biosynthesis of 5-methylaminomethyl-2-thiouridine (mnm(5)s(2)U) at the wobble position (U34) in tRNA. Catalyzes the FAD-dependent demodification of cmnm(5)s(2)U34 to nm(5)s(2)U34, followed by the transfer of a methyl group from S-adenosyl-L-methionine to nm(5)s(2)U34, to form mnm(5)s(2)U34. This Salmonella paratyphi B (strain ATCC BAA-1250 / SPB7) protein is tRNA 5-methylaminomethyl-2-thiouridine biosynthesis bifunctional protein MnmC.